Consider the following 449-residue polypeptide: Anther-specific proline-rich protein APG (449 aa).

Pro residues predominate over residues 1–118; sequence PPKPQPKPPP…KPPAPSPPKP (118 aa). Positions 1–123 are disordered; it reads PPKPQPKPPP…SPPKPQNKTI (123 aa). Serine 132 serves as the catalytic Nucleophile. Active-site residues include aspartate 425 and histidine 428.

Belongs to the 'GDSL' lipolytic enzyme family. In terms of tissue distribution, found in anther, only in male fertile plants.

In Brassica napus (Rape), this protein is Anther-specific proline-rich protein APG (APG).